Reading from the N-terminus, the 640-residue chain is 1-deoxy-D-xylulose-5-phosphate synthase (640 aa).

Thiamine diphosphate is bound by residues His78 and 119–121; that span reads GHS. Mg(2+) is bound at residue Asp151. Thiamine diphosphate is bound by residues 152–153, Asn180, Tyr289, and Glu371; that span reads GA. Residue Asn180 coordinates Mg(2+).

Belongs to the transketolase family. DXPS subfamily. Homodimer. Requires Mg(2+) as cofactor. Thiamine diphosphate serves as cofactor.

It carries out the reaction D-glyceraldehyde 3-phosphate + pyruvate + H(+) = 1-deoxy-D-xylulose 5-phosphate + CO2. Its pathway is metabolic intermediate biosynthesis; 1-deoxy-D-xylulose 5-phosphate biosynthesis; 1-deoxy-D-xylulose 5-phosphate from D-glyceraldehyde 3-phosphate and pyruvate: step 1/1. In terms of biological role, catalyzes the acyloin condensation reaction between C atoms 2 and 3 of pyruvate and glyceraldehyde 3-phosphate to yield 1-deoxy-D-xylulose-5-phosphate (DXP). This is 1-deoxy-D-xylulose-5-phosphate synthase from Bartonella quintana (strain Toulouse) (Rochalimaea quintana).